A 198-amino-acid polypeptide reads, in one-letter code: dCTP deaminase, dUMP-forming (198 aa).

DCTP contacts are provided by residues 115–120, Asp-133, 141–143, Gln-162, Tyr-175, and Lys-184; these read KSSIAR and TLE. The active-site Proton donor/acceptor is Glu-143.

This sequence belongs to the dCTP deaminase family. In terms of assembly, homotrimer.

It carries out the reaction dCTP + 2 H2O = dUMP + NH4(+) + diphosphate. Its pathway is pyrimidine metabolism; dUMP biosynthesis; dUMP from dCTP: step 1/1. Functionally, bifunctional enzyme that catalyzes both the deamination of dCTP to dUTP and the hydrolysis of dUTP to dUMP without releasing the toxic dUTP intermediate. The protein is dCTP deaminase, dUMP-forming of Nanoarchaeum equitans (strain Kin4-M).